We begin with the raw amino-acid sequence, 174 residues long: MACGPGDLQSLTSPLSSARLDYQPSIEGPWLRACGQTNVSCRVVKGKLVEVGKWPWQVSILFLGTYICSGSLIHHQWVLTAAHCLQRFKDLSLYSVMVGVHQRPENSTQLPLTRMVIHKDFSNLMSQDIALLKLRDSISWSPFVQPVCLPNIKFKPSIGSMCWVIGWGTTGKKG.

One can recognise a Peptidase S1 domain in the interval Val43 to Gly174. Cys68 and Cys84 are joined by a disulfide. Active-site charge relay system residues include His83 and Asp128.

The protein belongs to the peptidase S1 family.

This is Putative serine protease 46 from Homo sapiens (Human).